The chain runs to 132 residues: Auxin-responsive protein SAUR72 (132 aa).

The tract at residues 22–54 is disordered; that stretch reads SDSQRPSRRSESFLRSSVTRRSKKQTSSVPEGH. Positions 23 to 33 are enriched in basic and acidic residues; that stretch reads DSQRPSRRSES.

The protein belongs to the ARG7 family. In terms of assembly, interacts with and inhibits PP2C-D subfamily of type 2C phosphatases such as PP2C67/PP2C-D1. As to expression, highly expressed in the steles of roots and hypocotyls.

It is found in the cytoplasm. Its function is as follows. Provide a mechanistic link between auxin and plasma membrane H(+)-ATPases (PM H(+)-ATPases, e.g. AHA1 and AHA2), and triggers PM H(+)-ATPases activity by promoting phosphorylation of their C-terminal autoinhibitory domain as a result of PP2C-D subfamily of type 2C phosphatases inhibition, thus leading to the acidification of the apoplast and the facilitation of solutes and water uptake to drive cell expansion. Plays a role in the regulation of cell expansion, root meristem patterning and auxin transport. This Arabidopsis thaliana (Mouse-ear cress) protein is Auxin-responsive protein SAUR72.